A 207-amino-acid chain; its full sequence is Fibroblast growth factor 18 (207 aa).

The signal sequence occupies residues 1-27 (MYSAPSACTCLCLHFLLLCFQVQVLAA). An N-linked (GlcNAc...) asparagine glycan is attached at N39. C109 and C127 are oxidised to a cystine. N-linked (GlcNAc...) asparagine glycosylation is present at N137. A disordered region spans residues 157–183 (GRPRKGPKTRENQQDVHFMKRYPKGQT). Residues 164–174 (KTRENQQDVHF) are compositionally biased toward basic and acidic residues.

This sequence belongs to the heparin-binding growth factors family. Interacts with FGFR3 and FGFR4. Mainly expressed in the lung. Not detected in brain, heart, liver, kidney and small intestine.

Its subcellular location is the secreted. In terms of biological role, plays an important role in the regulation of cell proliferation, cell differentiation and cell migration. Required for normal ossification and bone development. Stimulates hepatic and intestinal proliferation. The chain is Fibroblast growth factor 18 (Fgf18) from Rattus norvegicus (Rat).